The chain runs to 480 residues: Acyl-lipid (8-3)-desaturase (480 aa).

Positions 1–30 (MAPHSADTAGLVPSDELRLRTSNSKGPEQE) are disordered. One can recognise a Cytochrome b5 heme-binding domain in the interval 33 to 107 (LKKYTLEDVS…LAKYCIGELV (75 aa)). Heme contacts are provided by His-68 and His-90. Transmembrane regions (helical) follow at residues 151–171 (IHPH…ASYY) and 173–193 (AFFW…MGFF). The Histidine box-1 motif lies at 203 to 207 (HDGNH). The short motif at 238 to 243 (HVVGHH) is the Histidine box-2 element. The next 3 membrane-spanning stretches (helical) occupy residues 280 to 300 (IYLA…DDFL), 322 to 342 (IFFQ…SVYG), and 348 to 368 (TFLA…AFLF). Residues 419-423 (QIEHH) carry the Histidine box-3 motif.

This sequence belongs to the fatty acid desaturase type 1 family. It depends on Fe(2+) as a cofactor.

The protein localises to the membrane. It catalyses the reaction an (8Z,11Z,14Z)-icosatrienoyl-containing glycerolipid + 2 Fe(II)-[cytochrome b5] + O2 + 2 H(+) = (5Z,8Z,11Z,14Z)-eicosatetraenoyl-containing glycerolipid + 2 Fe(III)-[cytochrome b5] + 2 H2O. The catalysed reaction is an (8Z,11Z,14Z,17Z)-eicosatetraenoyl-containing glycerolipid + 2 Fe(II)-[cytochrome b5] + O2 + 2 H(+) = a (5Z,8Z,11Z,14Z,17Z)-eicosapentaenoyl-containing glycerolipid + 2 Fe(III)-[cytochrome b5] + 2 H2O. Its function is as follows. Fatty acid desaturase that introduces a cis double bond at the 5-position in 20-carbon polyunsaturated fatty acids incorporated in a glycerolipid that contain a Delta(8) double bond. This is Acyl-lipid (8-3)-desaturase from Physcomitrium patens (Spreading-leaved earth moss).